A 664-amino-acid chain; its full sequence is Exoribonuclease 2 (664 aa).

In terms of domain architecture, RNB spans 193–521; that stretch reads RIDMTHIPFV…INHRMLKALI (329 aa). The 83-residue stretch at 568-650 folds into the S1 motif domain; it reads QTLFTGEIFD…ENRSLVAKPT (83 aa).

This sequence belongs to the RNR ribonuclease family. RNase II subfamily.

The protein resides in the cytoplasm. The enzyme catalyses Exonucleolytic cleavage in the 3'- to 5'-direction to yield nucleoside 5'-phosphates.. Its function is as follows. Involved in mRNA degradation. Hydrolyzes single-stranded polyribonucleotides processively in the 3' to 5' direction. The chain is Exoribonuclease 2 from Vibrio vulnificus (strain YJ016).